Consider the following 1321-residue polypeptide: MSDSVILRSIKKFGEENDGFESDKSYNNDKKSRLQDEKKGDGVRVGFFQLFRFSSSTDIWLMFVGSLCAFLHGIAQPGVLLIFGTMTDVFIDYDVELQELQIPGKACVNNTIVWTNSSLNQNMTNGTRCGLLNIESEMIKFASYYAGIAVAVLITGYIQICFWVIAAARQIQKMRKFYFRRIMRMEIGWFDCNSVGELNTRFSDDINKINDAIADQMALFIQRMTSTICGFLLGFFRGWKLTLVIISVSPLIGIGAATIGLSVSKFTDYELKAYAKAGVVADEVISSMRTVAAFGGEKREVERYEKNLVFAQRWGIRKGIVMGFFTGFVWCLIFLCYALAFWYGSTLVLDEGEYTPGTLVQIFLSVIVGALNLGNASPCLEAFATGRAAATSIFETIDRKPIIDCMSEDGYKLDRIKGEIEFHNVTFHYPSRPEVKILNDLNMVIKPGEMTALVGPSGAGKSTALQLIQRFYDPCEGMVTVDGHDIRSLNIQWLRDQIGIVEQEPVLFSTTIAENIRYGREDATMEDIVQAAKEANAYNFIMDLPQQFDTLVGEGGGQMSGGQKQRVAIARALIRNPKILLLDMATSALDNESEAMVQEVLSKIQHGHTIISVAHRLSTVRAADTIIGFEHGTAVERGTHEELLERKGVYFTLVTLQSQGNQALNEEDIKDATEDDMLARTFSRGSYQDSLRASIRQRSKSQLSYLVHEPPLAVVDHKSTYEEDRKDKDIPVQEEVEPAPVRRILKFSAPEWPYMLVGSVGAAVNGTVTPLYAFLFSQILGTFSIPDKEEQRSQINGVCLLFVAMGCVSLFTQFLQGYAFAKSGELLTKRLRKFGFRAMLGQDIAWFDDLRNSPGALTTRLATDASQVQGAAGSQIGMIVNSFTNVTVAMIIAFSFSWKLSLVILCFFPFLALSGATQTRMLTGFASRDKQALEMVGQITNEALSNIRTVAGIGKERRFIEALETELEKPFKTAIQKANIYGFCFAFAQCIMFIANSASYRYGGYLISNEGLHFSYVFRVISAVVLSATALGRAFSYTPSYAKAKISAARFFQLLDRQPPISVYNTAGEKWDNFQGKIDFVDCKFTYPSRPDSQVLNGLSVSISPGQTLAFVGSSGCGKSTSIQLLERFYDPDQGKVMIDGHDSKKVNVQFLRSNIGIVSQEPVLFACSIMDNIKYGDNTKEIPMERVIAAAKQAQLHDFVMSLPEKYETNVGSQGSQLSRGEKQRIAIARAIVRDPKILLLDEATSALDTESEKTVQVALDKAREGRTCIVIAHRLSTIQNADIIAVMAQGVVIEKGTHEELMAQKGAYYKLVTTGSPIS.

The Cytoplasmic segment spans residues 1–62 (MSDSVILRSI…FSSSTDIWLM (62 aa)). Positions 16–37 (ENDGFESDKSYNNDKKSRLQDE) are disordered. Basic and acidic residues predominate over residues 21 to 37 (ESDKSYNNDKKSRLQDE). The ABC transmembrane type-1 1 domain maps to 62-385 (MFVGSLCAFL…ASPCLEAFAT (324 aa)). A helical transmembrane segment spans residues 63-83 (FVGSLCAFLHGIAQPGVLLIF). The Extracellular segment spans residues 84–147 (GTMTDVFIDY…MIKFASYYAG (64 aa)). Residues Asn-109, Asn-116, Asn-122, and Asn-125 are each glycosylated (N-linked (GlcNAc...) asparagine). Residues 148–168 (IAVAVLITGYIQICFWVIAAA) form a helical membrane-spanning segment. The Cytoplasmic segment spans residues 169-215 (RQIQKMRKFYFRRIMRMEIGWFDCNSVGELNTRFSDDINKINDAIAD). A helical transmembrane segment spans residues 216–236 (QMALFIQRMTSTICGFLLGFF). The Extracellular portion of the chain corresponds to 237 to 240 (RGWK). The chain crosses the membrane as a helical span at residues 241 to 261 (LTLVIISVSPLIGIGAATIGL). Over 262–319 (SVSKFTDYELKAYAKAGVVADEVISSMRTVAAFGGEKREVERYEKNLVFAQRWGIRKG) the chain is Cytoplasmic. Residues 320 to 340 (IVMGFFTGFVWCLIFLCYALA) form a helical membrane-spanning segment. Residues 341–353 (FWYGSTLVLDEGE) lie on the Extracellular side of the membrane. Residues 354–374 (YTPGTLVQIFLSVIVGALNLG) traverse the membrane as a helical segment. At 375-755 (NASPCLEAFA…KFSAPEWPYM (381 aa)) the chain is on the cytoplasmic side. An ABC transporter 1 domain is found at 420-656 (IEFHNVTFHY…KGVYFTLVTL (237 aa)). Position 455–462 (455–462 (GPSGAGKS)) interacts with ATP. Position 586 is a phosphothreonine (Thr-586). Phosphoserine is present on Ser-587. The interval 651 to 672 (FTLVTLQSQGNQALNEEDIKDA) is interaction with HAX1. Phosphoserine is present on residues Ser-690, Ser-701, and Ser-704. Residues 755–1043 (MLVGSVGAAV…AFSYTPSYAK (289 aa)) enclose the ABC transmembrane type-1 2 domain. The chain crosses the membrane as a helical span at residues 756-776 (LVGSVGAAVNGTVTPLYAFLF). The Extracellular segment spans residues 777–794 (SQILGTFSIPDKEEQRSQ). Residues 795–815 (INGVCLLFVAMGCVSLFTQFL) form a helical membrane-spanning segment. The Cytoplasmic segment spans residues 816 to 869 (QGYAFAKSGELLTKRLRKFGFRAMLGQDIAWFDDLRNSPGALTTRLATDASQVQ). 2 consecutive transmembrane segments (helical) span residues 870 to 890 (GAAGSQIGMIVNSFTNVTVAM) and 891 to 911 (IIAFSFSWKLSLVILCFFPFL). The Cytoplasmic segment spans residues 912 to 979 (ALSGATQTRM…PFKTAIQKAN (68 aa)). The chain crosses the membrane as a helical span at residues 980–1000 (IYGFCFAFAQCIMFIANSASY). At 1001 to 1011 (RYGGYLISNEG) the chain is on the extracellular side. A helical membrane pass occupies residues 1012–1032 (LHFSYVFRVISAVVLSATALG). The Cytoplasmic segment spans residues 1033–1321 (RAFSYTPSYA…KLVTTGSPIS (289 aa)). The ABC transporter 2 domain maps to 1078–1316 (IDFVDCKFTY…KGAYYKLVTT (239 aa)). 1113–1120 (GSSGCGKS) contacts ATP. Residue Ser-1214 is modified to Phosphoserine. Residues 1311-1314 (YKLV) form a mediates internalization from the plasma membrane region. Ser-1321 is subject to Phosphoserine.

This sequence belongs to the ABC transporter superfamily. ABCB family. Multidrug resistance exporter (TC 3.A.1.201) subfamily. As to quaternary structure, interacts with HAX1. Interacts with the adapter protein complex 2 (AP-2) throught AP2A2 or AP2A1; this interaction regulates cell membrane expression of ABCB11 through its internalization in a clathrin-dependent manner and its subsequent degradation. In terms of processing, N-glycosylated. Post-translationally, ubiquitinated; short-chain ubiquitination regulates cell-Surface expression of ABCB11. In terms of tissue distribution, expressed predominantly, if not exclusively in the liver, where it was further localized to the canalicular microvilli and to subcanalicular vesicles of the hepatocytes by in situ.

It localises to the apical cell membrane. The protein localises to the recycling endosome membrane. The protein resides in the endosome. It is found in the cell membrane. It carries out the reaction cholate(in) + ATP + H2O = cholate(out) + ADP + phosphate + H(+). The catalysed reaction is taurocholate(in) + ATP + H2O = taurocholate(out) + ADP + phosphate + H(+). The enzyme catalyses glycocholate(in) + ATP + H2O = glycocholate(out) + ADP + phosphate + H(+). It catalyses the reaction glycochenodeoxycholate(in) + ATP + H2O = glycochenodeoxycholate(out) + ADP + phosphate + H(+). It carries out the reaction taurochenodeoxycholate(in) + ATP + H2O = taurochenodeoxycholate(out) + ADP + phosphate + H(+). The catalysed reaction is glycoursodeoxycholate(in) + ATP + H2O = glycoursodeoxycholate(out) + ADP + phosphate + H(+). The enzyme catalyses tauroursodeoxycholate(in) + ATP + H2O = tauroursodeoxycholate(out) + ADP + phosphate + H(+). It catalyses the reaction taurodeoxycholate(in) + ATP + H2O = taurodeoxycholate(out) + ADP + phosphate + H(+). It carries out the reaction taurolithocholate 3-sulfate(in) + ATP + H2O = taurolithocholate 3-sulfate(out) + ADP + phosphate + H(+). The catalysed reaction is pravastatin(in) + ATP + H2O = pravastatin(out) + ADP + phosphate + H(+). The uptake of taurocholate is inhibited by taurolithocholate sulfate with an IC(50) of 9 uM. Pravastatin competitively inhibits the transport of taurocholic acid. Cyclosporin A, glibenclamide, rifampicin and troglitazonestrongly competitively inhibit the transport activity of taurocholate. The canalicular transport activity of taurocholate is strongly dependent on canalicular membrane cholesterol content. The uptake of taurocholate is increased by short- and medium-chain fatty acids. Cholesterol increases transport capacity of taurocholate without affecting the affinity for the substrate. Its function is as follows. Catalyzes the transport of the major hydrophobic bile salts, such as taurine and glycine-conjugated cholic acid across the canalicular membrane of hepatocytes in an ATP-dependent manner, therefore participates in hepatic bile acid homeostasis and consequently to lipid homeostasis through regulation of biliary lipid secretion in a bile salts dependent manner. Transports taurine-conjugated bile salts more rapidly than glycine-conjugated bile salts. Also transports non-bile acid compounds, such as pravastatin and fexofenadine in an ATP-dependent manner and may be involved in their biliary excretion. The sequence is that of Bile salt export pump from Homo sapiens (Human).